A 136-amino-acid chain; its full sequence is 1,4-dihydroxy-2-naphthoyl-CoA hydrolase (136 aa).

Glu63 functions as the Nucleophile or proton acceptor in the catalytic mechanism. Residues Gly82, 89–92, and 106–111 each bind substrate; these read HVRS and HLGSRH.

This sequence belongs to the thioesterase PaaI family. Homotetramer. Dimer of dimers.

The catalysed reaction is 1,4-dihydroxy-2-naphthoyl-CoA + H2O = 1,4-dihydroxy-2-naphthoate + CoA + H(+). Its pathway is quinol/quinone metabolism; 1,4-dihydroxy-2-naphthoate biosynthesis; 1,4-dihydroxy-2-naphthoate from chorismate: step 7/7. It functions in the pathway quinol/quinone metabolism; menaquinone biosynthesis. Its function is as follows. Catalyzes the hydrolysis of 1,4-dihydroxy-2-naphthoyl-CoA (DHNA-CoA) to 1,4-dihydroxy-2-naphthoate (DHNA). Also shows significant activity toward a wide range of acyl-CoA thioesters, and minimal activity toward benzoyl-holoEntB. The sequence is that of 1,4-dihydroxy-2-naphthoyl-CoA hydrolase from Escherichia coli (strain K12).